We begin with the raw amino-acid sequence, 400 residues long: Queuine tRNA-ribosyltransferase catalytic subunit (400 aa).

D89 acts as the Proton acceptor in catalysis. Residues 89-93 (DSGGF), D143, Q185, and G212 contribute to the substrate site. An RNA binding region spans residues 243–249 (GVGFPVD). D262 (nucleophile) is an active-site residue. Residues 267–271 (TRTAR) form an RNA binding; important for wobble base 34 recognition region. Positions 301, 303, 306, and 331 each coordinate Zn(2+).

Belongs to the queuine tRNA-ribosyltransferase family. In terms of assembly, heterodimer of a catalytic subunit and an accessory subunit. Zn(2+) serves as cofactor.

The protein localises to the cytoplasm. The enzyme catalyses guanosine(34) in tRNA + queuine = queuosine(34) in tRNA + guanine. Catalytic subunit of the queuine tRNA-ribosyltransferase (TGT) that catalyzes the base-exchange of a guanine (G) residue with queuine (Q) at position 34 (anticodon wobble position) in tRNAs with GU(N) anticodons (tRNA-Asp, -Asn, -His and -Tyr), resulting in the hypermodified nucleoside queuosine (7-(((4,5-cis-dihydroxy-2-cyclopenten-1-yl)amino)methyl)-7-deazaguanosine). Catalysis occurs through a double-displacement mechanism. The nucleophile active site attacks the C1' of nucleotide 34 to detach the guanine base from the RNA, forming a covalent enzyme-RNA intermediate. The proton acceptor active site deprotonates the incoming queuine, allowing a nucleophilic attack on the C1' of the ribose to form the product. This Caenorhabditis elegans protein is Queuine tRNA-ribosyltransferase catalytic subunit.